The primary structure comprises 195 residues: Dual-action ribosomal maturation protein DarP (195 aa).

It belongs to the DarP family.

Its subcellular location is the cytoplasm. Its function is as follows. Member of a network of 50S ribosomal subunit biogenesis factors which assembles along the 30S-50S interface, preventing incorrect 23S rRNA structures from forming. Promotes peptidyl transferase center (PTC) maturation. This chain is Dual-action ribosomal maturation protein DarP, found in Stenotrophomonas maltophilia (strain K279a).